The following is a 245-amino-acid chain: Adenosylcobinamide-GDP ribazoletransferase (245 aa).

The next 5 helical transmembrane spans lie at 31-51, 57-77, 109-129, 134-154, and 176-196; these read LLHY…AALL, PLLQ…ALHL, VAVV…LVVL, PAAL…LFLC, and ALMV…TGLL.

Belongs to the CobS family. Mg(2+) is required as a cofactor.

It localises to the cell inner membrane. It catalyses the reaction alpha-ribazole + adenosylcob(III)inamide-GDP = adenosylcob(III)alamin + GMP + H(+). The catalysed reaction is alpha-ribazole 5'-phosphate + adenosylcob(III)inamide-GDP = adenosylcob(III)alamin 5'-phosphate + GMP + H(+). It functions in the pathway cofactor biosynthesis; adenosylcobalamin biosynthesis; adenosylcobalamin from cob(II)yrinate a,c-diamide: step 7/7. Joins adenosylcobinamide-GDP and alpha-ribazole to generate adenosylcobalamin (Ado-cobalamin). Also synthesizes adenosylcobalamin 5'-phosphate from adenosylcobinamide-GDP and alpha-ribazole 5'-phosphate. The polypeptide is Adenosylcobinamide-GDP ribazoletransferase (Stutzerimonas stutzeri (strain A1501) (Pseudomonas stutzeri)).